Consider the following 657-residue polypeptide: Methionine--tRNA ligase (657 aa).

The 'HIGH' region signature appears at 13–23 (YYPSGNLHIGH). The short motif at 308–312 (KMSKS) is the 'KMSKS' region element. An ATP-binding site is contributed by K311. One can recognise a tRNA-binding domain in the interval 557–657 (DFDKVEIKAA…SAIPNGAVIK (101 aa)).

Belongs to the class-I aminoacyl-tRNA synthetase family. MetG type 2B subfamily. In terms of assembly, homodimer.

It is found in the cytoplasm. The enzyme catalyses tRNA(Met) + L-methionine + ATP = L-methionyl-tRNA(Met) + AMP + diphosphate. Is required not only for elongation of protein synthesis but also for the initiation of all mRNA translation through initiator tRNA(fMet) aminoacylation. This chain is Methionine--tRNA ligase, found in Staphylococcus aureus (strain COL).